The chain runs to 86 residues: uncharacterized protein (86 aa).

This is an uncharacterized protein from Psittacid herpesvirus 1 (isolate Amazon parrot/-/97-0001/1997) (PsHV-1).